Reading from the N-terminus, the 152-residue chain is Xanthine-guanine phosphoribosyltransferase (152 aa).

Residues 37 to 38 (RG), Arg69, and 88 to 96 (DDLVDTGGT) contribute to the 5-phospho-alpha-D-ribose 1-diphosphate site. Position 69 (Arg69) interacts with GMP. Position 89 (Asp89) interacts with Mg(2+). 2 residues coordinate guanine: Asp92 and Ile135. Xanthine contacts are provided by Asp92 and Ile135. GMP contacts are provided by residues 92-96 (DTGGT) and 134-135 (WI).

This sequence belongs to the purine/pyrimidine phosphoribosyltransferase family. XGPT subfamily. In terms of assembly, homotetramer. Mg(2+) serves as cofactor.

It localises to the cell inner membrane. The enzyme catalyses GMP + diphosphate = guanine + 5-phospho-alpha-D-ribose 1-diphosphate. The catalysed reaction is XMP + diphosphate = xanthine + 5-phospho-alpha-D-ribose 1-diphosphate. It catalyses the reaction IMP + diphosphate = hypoxanthine + 5-phospho-alpha-D-ribose 1-diphosphate. It participates in purine metabolism; GMP biosynthesis via salvage pathway; GMP from guanine: step 1/1. Its pathway is purine metabolism; XMP biosynthesis via salvage pathway; XMP from xanthine: step 1/1. Functionally, purine salvage pathway enzyme that catalyzes the transfer of the ribosyl-5-phosphate group from 5-phospho-alpha-D-ribose 1-diphosphate (PRPP) to the N9 position of the 6-oxopurines guanine and xanthine to form the corresponding ribonucleotides GMP (guanosine 5'-monophosphate) and XMP (xanthosine 5'-monophosphate), with the release of PPi. To a lesser extent, also acts on hypoxanthine. The polypeptide is Xanthine-guanine phosphoribosyltransferase (Shigella boydii serotype 4 (strain Sb227)).